A 208-amino-acid chain; its full sequence is Small ribosomal subunit protein uS4 (208 aa).

In terms of domain architecture, S4 RNA-binding spans 95–159 (RRIDNIVYRA…FKKLVRSNIE (65 aa)).

It belongs to the universal ribosomal protein uS4 family. Part of the 30S ribosomal subunit. Contacts protein S5. The interaction surface between S4 and S5 is involved in control of translational fidelity.

One of the primary rRNA binding proteins, it binds directly to 16S rRNA where it nucleates assembly of the body of the 30S subunit. Its function is as follows. With S5 and S12 plays an important role in translational accuracy. This chain is Small ribosomal subunit protein uS4, found in Borrelia recurrentis (strain A1).